A 383-amino-acid chain; its full sequence is Lipoyl synthase, mitochondrial (383 aa).

Polar residues predominate over residues S25–D34. Residues S25 to G44 form a disordered region. [4Fe-4S] cluster is bound by residues C110, C115, C121, C141, C145, C148, and S357. The Radical SAM core domain maps to E126 to R346.

It belongs to the radical SAM superfamily. Lipoyl synthase family. It depends on [4Fe-4S] cluster as a cofactor.

The protein localises to the mitochondrion. The catalysed reaction is [[Fe-S] cluster scaffold protein carrying a second [4Fe-4S](2+) cluster] + N(6)-octanoyl-L-lysyl-[protein] + 2 oxidized [2Fe-2S]-[ferredoxin] + 2 S-adenosyl-L-methionine + 4 H(+) = [[Fe-S] cluster scaffold protein] + N(6)-[(R)-dihydrolipoyl]-L-lysyl-[protein] + 4 Fe(3+) + 2 hydrogen sulfide + 2 5'-deoxyadenosine + 2 L-methionine + 2 reduced [2Fe-2S]-[ferredoxin]. Its pathway is protein modification; protein lipoylation via endogenous pathway; protein N(6)-(lipoyl)lysine from octanoyl-[acyl-carrier-protein]: step 2/2. Catalyzes the radical-mediated insertion of two sulfur atoms into the C-6 and C-8 positions of the octanoyl moiety bound to the lipoyl domains of lipoate-dependent enzymes, thereby converting the octanoylated domains into lipoylated derivatives. The sequence is that of Lipoyl synthase, mitochondrial from Zea mays (Maize).